A 743-amino-acid polypeptide reads, in one-letter code: Polyribonucleotide nucleotidyltransferase (743 aa).

Residues Asp-494 and Asp-500 each coordinate Mg(2+). A KH domain is found at 561–620 (PQHAEVFVNPDIIRLIIGPGGKNIKAITAATGASVDIEDSGRVSIFAPTAEALEKAREMV). Residues 630-704 (GKNYNAKVRK…SRKAVLLEEQ (75 aa)) form the S1 motif domain. The interval 702–743 (EEQGHPWNPEDTARPQRSDRGDRGDRRGDRGGRDRRDRGDRR) is disordered. Over residues 712 to 743 (DTARPQRSDRGDRGDRRGDRGGRDRRDRGDRR) the composition is skewed to basic and acidic residues.

This sequence belongs to the polyribonucleotide nucleotidyltransferase family. Mg(2+) is required as a cofactor.

Its subcellular location is the cytoplasm. It carries out the reaction RNA(n+1) + phosphate = RNA(n) + a ribonucleoside 5'-diphosphate. In terms of biological role, involved in mRNA degradation. Catalyzes the phosphorolysis of single-stranded polyribonucleotides processively in the 3'- to 5'-direction. The polypeptide is Polyribonucleotide nucleotidyltransferase (Desulfovibrio desulfuricans (strain ATCC 27774 / DSM 6949 / MB)).